The sequence spans 345 residues: tRNA N6-adenosine threonylcarbamoyltransferase (345 aa).

Fe cation contacts are provided by His-111 and His-115. Substrate is bound by residues 134–138, Asp-167, Gly-180, and Asn-276; that span reads LVSGG. Asp-304 serves as a coordination point for Fe cation.

It belongs to the KAE1 / TsaD family. Requires Fe(2+) as cofactor.

It localises to the cytoplasm. It catalyses the reaction L-threonylcarbamoyladenylate + adenosine(37) in tRNA = N(6)-L-threonylcarbamoyladenosine(37) in tRNA + AMP + H(+). Functionally, required for the formation of a threonylcarbamoyl group on adenosine at position 37 (t(6)A37) in tRNAs that read codons beginning with adenine. Is involved in the transfer of the threonylcarbamoyl moiety of threonylcarbamoyl-AMP (TC-AMP) to the N6 group of A37, together with TsaE and TsaB. TsaD likely plays a direct catalytic role in this reaction. The protein is tRNA N6-adenosine threonylcarbamoyltransferase of Alcanivorax borkumensis (strain ATCC 700651 / DSM 11573 / NCIMB 13689 / SK2).